We begin with the raw amino-acid sequence, 444 residues long: Aspartate--tRNA(Asp/Asn) ligase (444 aa).

Residue E176 participates in L-aspartate binding. The segment at 198 to 201 (QLFK) is aspartate. R220 is an L-aspartate binding site. ATP-binding positions include 220 to 222 (RAE), 228 to 230 (RHL), and E367. Mg(2+)-binding residues include E367 and S370. 2 residues coordinate L-aspartate: S370 and R374. 415-418 (GCER) is a binding site for ATP.

The protein belongs to the class-II aminoacyl-tRNA synthetase family. Type 2 subfamily. As to quaternary structure, homodimer. Mg(2+) serves as cofactor.

Its subcellular location is the cytoplasm. The enzyme catalyses tRNA(Asx) + L-aspartate + ATP = L-aspartyl-tRNA(Asx) + AMP + diphosphate. Aspartyl-tRNA synthetase with relaxed tRNA specificity since it is able to aspartylate not only its cognate tRNA(Asp) but also tRNA(Asn). Reaction proceeds in two steps: L-aspartate is first activated by ATP to form Asp-AMP and then transferred to the acceptor end of tRNA(Asp/Asn). In Methanosarcina barkeri (strain Fusaro / DSM 804), this protein is Aspartate--tRNA(Asp/Asn) ligase.